The following is a 1149-amino-acid chain: Potassium channel subfamily U member 1 (1149 aa).

Over 1-24 (MFQTKLRNESWEDLQKMSCTTEIQ) the chain is Extracellular. Residues 25 to 45 (VAFILSSFMTFISGLIILLIF) form a helical membrane-spanning segment. Over 46–101 (RLIWRTVKKWQIIKGTGIILELFTSGSIRRNHVRSLHFHGRFRDRIEMLLSAQTFV) the chain is Cytoplasmic. The chain crosses the membrane as a helical span at residues 102-122 (GQVLVILVFVLSIGSLIIYFI). Topologically, residues 123–138 (NSADPVGSCSSYEDKT) are extracellular. A helical membrane pass occupies residues 139–159 (IPVDLVFNAFFSFYFGLRFMA). At 160 to 163 (ADDK) the chain is on the cytoplasmic side. Residues 164-184 (IKFWLEMNSIVDIFTIPPTFI) form a helical membrane-spanning segment. Residues 185–188 (SYYL) lie on the Extracellular side of the membrane. A helical; Voltage-sensor transmembrane segment spans residues 189 to 209 (KSNWLGLRFLRALRLLELPRI). Over 210–226 (LQILRAIKTSNSVKFSK) the chain is Cytoplasmic. Residues 227-247 (LLSIVLSTWFTAAGFIHLVEN) form a helical membrane-spanning segment. Over 248–259 (SGDPWLKGRNSQ) the chain is Extracellular. Residues 260–282 (NISYFDSVYLVMATTSTVGFGDV) constitute an intramembrane region (pore-forming). The short motif at 276–279 (TVGF) is the Selectivity for potassium element. Topologically, residues 283 to 291 (VAKTSLGRT) are extracellular. A helical membrane pass occupies residues 292–312 (FIIFFTLGSLILFANYIPEMV). Residues 313 to 1149 (ELFANKRKYT…EDPFAYSEPL (837 aa)) are Cytoplasmic-facing. RCK N-terminal domains lie at 331 to 473 (KKFI…DNII) and 713 to 884 (RNHI…EGSL). The span at 829 to 845 (IDSSSDSSPSVSEETAS) shows a compositional bias: low complexity. 2 disordered regions span residues 829–851 (IDSS…NGHN) and 1106–1149 (ARNQ…SEPL). Over residues 1106 to 1120 (ARNQIRTNSSITSQK) the composition is skewed to polar residues.

The protein belongs to the potassium channel family. Calcium-activated (TC 1.A.1.3) subfamily. KCa5.1/KCNU1 sub-subfamily. In terms of assembly, homotetramer; which constitutes the calcium-activated potassium channel. Interacts with LRRC52; this interaction changes some channel gating properties, such as shifting gating to more negative potentials at a given pH. In terms of tissue distribution, testis-specific.

The protein resides in the cell membrane. It is found in the cell projection. Its subcellular location is the cilium. It localises to the flagellum membrane. The catalysed reaction is K(+)(in) = K(+)(out). With respect to regulation, regulated by changes in cytosolic pH; activated by alkalization. VU0546110 acts as a selective inhibitor. The auxiliary subunit LRRC52 shifts the activation of KCNU1 to more negative potentials at a given pH. In terms of biological role, testis-specific potassium channel activated by both intracellular pH and membrane voltage that mediates export of K(+). Represents the primary spermatozoan K(+) current. The channel underlies a pH-triggered membrane hyperpolarization during the process of sperm capacitation, as sperm encounter the alkaline environment near the ovum in the female reproductive tract, thereby playing an essential for male fertility. This is Potassium channel subfamily U member 1 (KCNU1) from Macaca fascicularis (Crab-eating macaque).